An 858-amino-acid chain; its full sequence is Elongation factor 2 (858 aa).

The region spanning 17–362 (ANIRNMSVIA…MITIHLPSPV (346 aa)) is the tr-type G domain. 26 to 33 (AHVDHGKS) contributes to the GTP binding site. Threonine 54 bears the Phosphothreonine mark. At threonine 57 the chain carries Phosphothreonine; by EEF2K. The residue at position 59 (threonine 59) is a Phosphothreonine. Lysine 152 is subject to N6-succinyllysine. Residues 158 to 161 (NKMD) and 216 to 218 (SGL) contribute to the GTP site. Lysine 235 carries the post-translational modification N6-acetyllysine. Lysine 239 bears the N6-acetyllysine; alternate mark. A Glycyl lysine isopeptide (Lys-Gly) (interchain with G-Cter in SUMO1); alternate cross-link involves residue lysine 239. Position 265 is a phosphotyrosine; by CSK (tyrosine 265). Lysine 272 carries the post-translational modification N6-acetyllysine; alternate. Lysine 272 is modified (N6-succinyllysine; alternate). At lysine 275 the chain carries N6-acetyllysine. A Glycyl lysine isopeptide (Lys-Gly) (interchain with G-Cter in SUMO) cross-link involves residue lysine 322. Serine 325 carries the phosphoserine modification. At tyrosine 373 the chain carries Phosphotyrosine; by CSK. Threonine 435 carries the phosphothreonine modification. N6-acetyllysine is present on residues lysine 439 and lysine 445. Residue serine 502 is modified to Phosphoserine. Lysine 525 bears the N6,N6,N6-trimethyllysine; by EEF2KMT mark. A Glycyl lysine isopeptide (Lys-Gly) (interchain with G-Cter in SUMO) cross-link involves residue lysine 529. Lysine 572 is modified (N6-succinyllysine). A Phosphoserine; by CDK2 modification is found at serine 595. Residue lysine 619 is modified to N6-acetyllysine. Histidine 715 carries the post-translational modification Diphthamide.

This sequence belongs to the TRAFAC class translation factor GTPase superfamily. Classic translation factor GTPase family. EF-G/EF-2 subfamily. In terms of assembly, binds to 80S ribosomes. Actively translating ribosomes show mutually exclusive binding of eIF5a (EIF5A or EIF5A2) and EEF2/eEF2. Interacts with SERBP1; interaction sequesters EEF2/eEF2 at the A-site of the ribosome, thereby blocking the interaction sites of the mRNA-tRNA complex, promoting ribosome stabilization and hibernation. Interacts with HABP4; interaction takes place at the A-site of hibernating ribosomes and promotes ribosome stabilization. Component of the mRNA surveillance SURF complex, at least composed of ERF1, ERF3 (ERF3A or ERF3B), EEF2, UPF1/RENT1, SMG1, SMG8 and SMG9. Interacts with RBPMS2. Post-translationally, phosphorylation by EF-2 kinase completely inactivates EF-2; it requires prior phosphorylation by CDK2 at Ser-595 during mitotic prometaphase. Phosphorylation by CSK promotes SUMOylation, proteolytic cleavage, and nuclear translocation if the C-terminal fragment. In terms of processing, diphthamide is 2-[3-carboxyamido-3-(trimethyl-ammonio)propyl]histidine. ISGylated. Post-translationally, proteolytically processed at two sites following phosphorylation by CSK. In terms of processing, SUMOylated following phosphorylation by CSK, promotes proteolytic cleavage.

It is found in the cytoplasm. Its subcellular location is the nucleus. The enzyme catalyses GTP + H2O = GDP + phosphate + H(+). Its function is as follows. Catalyzes the GTP-dependent ribosomal translocation step during translation elongation. During this step, the ribosome changes from the pre-translocational (PRE) to the post-translocational (POST) state as the newly formed A-site-bound peptidyl-tRNA and P-site-bound deacylated tRNA move to the P and E sites, respectively. Catalyzes the coordinated movement of the two tRNA molecules, the mRNA and conformational changes in the ribosome. The chain is Elongation factor 2 (EEF2) from Pongo abelii (Sumatran orangutan).